The sequence spans 23 residues: Septenin 2d (23 aa).

As to expression, expressed in skin glands.

The protein resides in the secreted. Its function is as follows. May act as an antimicrobial peptide. This chain is Septenin 2d, found in Osteopilus septentrionalis (Cuban treefrog).